We begin with the raw amino-acid sequence, 902 residues long: Protein translocase subunit SecA (902 aa).

ATP-binding positions include Q87, 105–109 (GEGKT), and D512. Residues 836–902 (DVEKVEEQHR…KFKQCCGKLK (67 aa)) are disordered. Residues 840-863 (VEEQHRKSENAPREYQHEEVEHVG) are compositionally biased toward basic and acidic residues. Residues C886, C888, C897, and C898 each contribute to the Zn(2+) site.

It belongs to the SecA family. As to quaternary structure, monomer and homodimer. Part of the essential Sec protein translocation apparatus which comprises SecA, SecYEG and auxiliary proteins SecDF-YajC and YidC. Zn(2+) serves as cofactor.

It is found in the cell inner membrane. Its subcellular location is the cytoplasm. The enzyme catalyses ATP + H2O + cellular proteinSide 1 = ADP + phosphate + cellular proteinSide 2.. Part of the Sec protein translocase complex. Interacts with the SecYEG preprotein conducting channel. Has a central role in coupling the hydrolysis of ATP to the transfer of proteins into and across the cell membrane, serving both as a receptor for the preprotein-SecB complex and as an ATP-driven molecular motor driving the stepwise translocation of polypeptide chains across the membrane. This chain is Protein translocase subunit SecA, found in Pseudoalteromonas translucida (strain TAC 125).